Consider the following 239-residue polypeptide: Carboxy-S-adenosyl-L-methionine synthase (239 aa).

S-adenosyl-L-methionine contacts are provided by residues Tyr35, 64 to 66 (GCS), 88 to 89 (DN), and Arg195.

Belongs to the class I-like SAM-binding methyltransferase superfamily. Cx-SAM synthase family. As to quaternary structure, homodimer.

The enzyme catalyses prephenate + S-adenosyl-L-methionine = carboxy-S-adenosyl-L-methionine + 3-phenylpyruvate + H2O. In terms of biological role, catalyzes the conversion of S-adenosyl-L-methionine (SAM) to carboxy-S-adenosyl-L-methionine (Cx-SAM). The polypeptide is Carboxy-S-adenosyl-L-methionine synthase (Helicobacter pylori (strain Shi470)).